Reading from the N-terminus, the 297-residue chain is Formylmethanofuran--tetrahydromethanopterin formyltransferase (297 aa).

It belongs to the FTR family. In terms of assembly, homotetramer.

It is found in the cytoplasm. It carries out the reaction N-formylmethanofuran + 5,6,7,8-tetrahydromethanopterin + H(+) = N(5)-formyl-5,6,7,8-tetrahydromethanopterin + methanofuran. It participates in metabolic intermediate metabolism; lactate oxidation. Catalyzes the transfer of a formyl group from 5-formyl tetrahydromethanopterin (5-formyl-H(4)MPT) to methanofuran (MFR) to produce formylmethanofuran (formyl-MFR) and tetrahydromethanopterin (H(4)MPT). The polypeptide is Formylmethanofuran--tetrahydromethanopterin formyltransferase (Archaeoglobus fulgidus (strain ATCC 49558 / DSM 4304 / JCM 9628 / NBRC 100126 / VC-16)).